A 579-amino-acid polypeptide reads, in one-letter code: Multidrug resistance-like ATP-binding protein MdlA (579 aa).

One can recognise an ABC transmembrane type-1 domain in the interval 18–303; sequence YTIAIFLLIS…FAWMFNIIER (286 aa). The next 6 helical transmembrane spans lie at 20–40, 53–73, 134–154, 155–175, 247–267, and 281–301; these read IAIFLLISISILQLYPPKLIG, KAPILPLILIILFISIIIYIL, GVLTLVDSLIMGVSVIIVMIT, QISWKLTIISLIPMPIMAIII, IIHLFISISHLLAITIGSYMI, and ILYLGLIIWPMLAFAWMFNII. The ABC transporter domain maps to 338 to 572; that stretch reads VKINYFKYSK…LKQWYGKTYL (235 aa). 370–377 provides a ligand contact to ATP; sequence GPTGSGKS.

This sequence belongs to the ABC transporter superfamily. Drug exporter-2 (TC 3.A.1.117) family.

It is found in the cell membrane. The catalysed reaction is ATP + H2O + xenobioticSide 1 = ADP + phosphate + xenobioticSide 2.. In Buchnera aphidicola subsp. Baizongia pistaciae (strain Bp), this protein is Multidrug resistance-like ATP-binding protein MdlA (mdlA).